Consider the following 442-residue polypeptide: Matrix remodeling-associated protein 8 (442 aa).

Positions 1 to 19 (MELLSRVLLWKLLLLQSSA) are cleaved as a signal peptide. Topologically, residues 20–340 (VLSSGPSGTA…PEDHTHFFQQ (321 aa)) are extracellular. 2 Ig-like V-type domains span residues 25–156 (PSGT…LEVT) and 159–291 (PLLS…LQVT). Cystine bridges form between Cys53-Cys136 and Cys185-Cys271. The N-linked (GlcNAc...) asparagine glycan is linked to Asn118. Positions 128–130 (RGD) match the RGD 1 motif. Residue Ser227 is modified to Phosphoserine. The RGD 2 motif lies at 251–253 (RGD). The segment at 296-319 (EPPARASPGNGSGHSSAPSPDPTL) is disordered. Asn305 carries N-linked (GlcNAc...) asparagine glycosylation. A helical membrane pass occupies residues 341–361 (LGYVLATLLLFILLLITVVLA). The Cytoplasmic portion of the chain corresponds to 362-442 (TRYRHSGGCK…DKEFRKEYCK (81 aa)).

As to quaternary structure, homodimer in cis. Does not appear to form trans-homodimers. Interacts with ITGB3; the interaction inhibits ITGAV:ITGB3 heterodimer formation. Widely expressed (at protein level). Highly expressed in brain where it localizes to the glia limitans, which is formed by the endfeet of astrocytes surrounding capillaries, and beneath the pia mater (at protein level). In lung, detected in epithelial cells of the bronchus (at protein level). Expressed in intercalated disks in the heart (at protein level). Detected in pancreatic alpha-cells in the islet of Langerhans (at protein level). In kidney, found in the brush border of the proximal convoluted tubule (at protein level). Expressed in the epithelium of the small intestine (at protein level). Weakly expressed in liver (at protein level). Detected in myeloid cells.

The protein resides in the cell membrane. The protein localises to the cell junction. Its subcellular location is the tight junction. It is found in the cytoplasm. It localises to the cell projection. The protein resides in the cilium membrane. The protein localises to the nucleus. Its function is as follows. Transmembrane protein which can modulate activity of various signaling pathways, probably via binding to integrin ITGAV:ITGB3. Mediates heterophilic cell-cell interactions in vitro. Inhibits osteoclastogenesis downstream of TNFSF11/RANKL and CSF1, where it may function by attenuating signaling via integrin ITGB3 and MAP kinase p38. Plays a role in cartilage formation where it promotes proliferation and maturation of growth plate chondrocytes. Stimulates formation of primary cilia in chondrocytes. Enhances expression of genes involved in the hedgehog signaling pathway in chondrocytes, including the hedgehog signaling molecule IHH; may also promote signaling via the PTHLH/PTHrP pathway. Plays a role in angiogenesis where it suppresses migration of endothelial cells and also promotes their apoptosis. Inhibits VEGF-induced activation of AKT and p38 MAP kinase in endothelial cells. Also inhibits VTN (vitronectin)-mediated integrin ITGAV:ITGB3 signaling and activation of PTK2/FAK. May play a role in the maturation and maintenance of the blood-brain barrier. This Mus musculus (Mouse) protein is Matrix remodeling-associated protein 8.